Consider the following 533-residue polypeptide: Probable intron-encoded endonuclease 3 (533 aa).

Transmembrane regions (helical) follow at residues 1–21 (MYLSIIILPLLGSIVAGFFGR), 30–50 (LITCLSVIITTGLAILAFFEV), and 81–101 (LTVAMLIPVLIISSLVHIYSI). The ndh-5 exon 1 encoded stretch occupies residues 1-108 (MYLSIIILPL…YSISYMSHDP (108 aa)). The ndh-5 intron 1 encoded stretch occupies residues 109–533 (RGRVRGKRVY…SISLLLGRRR (425 aa)).

The protein in the N-terminal section; belongs to the complex I subunit 5 family. This sequence in the C-terminal section; belongs to the LAGLIDADG endonuclease family.

It is found in the mitochondrion membrane. Its function is as follows. Mitochondrial DNA endonuclease involved in intron homing. The protein is Probable intron-encoded endonuclease 3 of Neurospora crassa (strain ATCC 24698 / 74-OR23-1A / CBS 708.71 / DSM 1257 / FGSC 987).